A 252-amino-acid polypeptide reads, in one-letter code: Ubiquinone biosynthesis protein COQ4 homolog 2, mitochondrial (252 aa).

The Zn(2+) site is built by H130, D131, H134, and E146.

The protein belongs to the COQ4 family. Component of a multi-subunit COQ enzyme complex. It depends on Zn(2+) as a cofactor.

It localises to the mitochondrion inner membrane. The enzyme catalyses a 4-hydroxy-3-methoxy-5-(all-trans-polyprenyl)benzoate + H(+) = a 2-methoxy-6-(all-trans-polyprenyl)phenol + CO2. It functions in the pathway cofactor biosynthesis; ubiquinone biosynthesis. Its function is as follows. Lyase that catalyzes the C1-decarboxylation of 4-hydroxy-3-methoxy-5-(all-trans-polyprenyl)benzoic acid into 2-methoxy-6-(all-trans-polyprenyl)phenol during ubiquinone biosynthesis. This chain is Ubiquinone biosynthesis protein COQ4 homolog 2, mitochondrial, found in Trypanosoma cruzi (strain CL Brener).